The chain runs to 506 residues: Maturase K (506 aa).

Belongs to the intron maturase 2 family. MatK subfamily.

Its subcellular location is the plastid. It localises to the chloroplast. Its function is as follows. Usually encoded in the trnK tRNA gene intron. Probably assists in splicing its own and other chloroplast group II introns. The chain is Maturase K from Wisteria frutescens (American wisteria).